The primary structure comprises 186 residues: MNWRSEHIWIELITGSRKTSNFCWACILFLGSLGFLVVGTSSYLGRNLISVFPSQQIIFFPQGIVMSFYGIAGLFISSYLWCTISWNVGSGYDRFDRKEGIVCIFRWGFPGINRRIFLRFLMRDIQSIRMQVKEGLYPRRVLYMEIRGQGAIPLTRTDENFTPREIEQKAAELAYFLRVPIEGKRN.

2 consecutive transmembrane segments (helical) span residues 22–42 and 57–77; these read FCWACILFLGSLGFLVVGTSS and IIFFPQGIVMSFYGIAGLFIS.

It belongs to the Ycf4 family.

It localises to the plastid. The protein resides in the chloroplast thylakoid membrane. In terms of biological role, seems to be required for the assembly of the photosystem I complex. This Dioscorea elephantipes (Elephant's foot yam) protein is Photosystem I assembly protein Ycf4.